Consider the following 178-residue polypeptide: MEKNWYVVHTYSGYENKVKTNLEKRVESMDMTDKIFRVMVPVEEETEVKNGKSKQVSRKVFPGYVLVEMVMTDDSWYVVRNTPGVTGFVGSAGAGSKPTPLLPEEVDAILRQMGMQEERQVEIDFQLKESVKVKEGPFANFIGTIEEIQLDKRKLKVHVNMFGRETPVELEFTQIEKI.

The KOW domain maps to 130-159; the sequence is SVKVKEGPFANFIGTIEEIQLDKRKLKVHV.

Belongs to the NusG family.

Its function is as follows. Participates in transcription elongation, termination and antitermination. The polypeptide is Transcription termination/antitermination protein NusG (Halalkalibacterium halodurans (strain ATCC BAA-125 / DSM 18197 / FERM 7344 / JCM 9153 / C-125) (Bacillus halodurans)).